The following is a 345-amino-acid chain: MEAHNQFLKTFQKERHDMKEAEKDEILLMENSRRFVMFPIKYHEIWAAYKKVEASFWTAEEIELAKDTEDFQKLTDDQKTYIGNLLALSISSDNLVNKYLIENFSAQLQNPEGKSFYGFQIMMENIYSEVYSMMVDAFFKDPKNIPLFKEIANLPEVKHKAAFIERWISNDDSLYAERLVAFAAKEGIFQAGNYASMFWLTDKKIMPGLAMANRNICRDRGAYTDFSCLLFAHLRTKPNPKIIEKIITEAVEIEKEYYSNSLPVEKFGMDLKSIHTYIEFVADGLLQGFGNEKYYNAVNPFEFMEDVATAGKTTFFEKKVSDYQKASDMSKSATPSKEINFDDDF.

Position 1 is an N-acetylmethionine (M1). Residue Y131 is part of the active site. Phosphoserine occurs at positions 169 and 332. A Phosphothreonine modification is found at T334. Phosphoserine is present on S336. Residue K337 forms a Glycyl lysine isopeptide (Lys-Gly) (interchain with G-Cter in ubiquitin) linkage.

It belongs to the ribonucleoside diphosphate reductase small chain family. In terms of assembly, heterotetramer of two large (R1) and two small (R2) subunits. S.cerevisiae has two different R1 subunits (RNR1 and RNR3) and two different R2 subunits (RNR2 and RNR4). The functional form of the small subunits is a RNR2-RNR4 heterodimer, where RNR2 provides the iron-radical center and RNR4 is required for proper folding of RNR2 and assembly with the large subunits. Under normal growth conditions, the active form of the large subunits is a homodimer of the constitutively expressed RNR1. In damaged cells or cells arrested for DNA synthesis, the reductase consists of multiple species because of the association of the small subunits (RNR2-RNR4) with either the RNR1 homodimer or a heterodimer of RNR1 and the damage-inducible RNR3. Interacts with DIF1.

Its subcellular location is the nucleus. It catalyses the reaction a 2'-deoxyribonucleoside 5'-diphosphate + [thioredoxin]-disulfide + H2O = a ribonucleoside 5'-diphosphate + [thioredoxin]-dithiol. Provides the precursors necessary for DNA synthesis. Catalyzes the biosynthesis of deoxyribonucleotides from the corresponding ribonucleotides. RNR4 is required for proper folding of RNR2 and assembly with the large subunits. The chain is Ribonucleoside-diphosphate reductase small chain 2 (RNR4) from Saccharomyces cerevisiae (strain ATCC 204508 / S288c) (Baker's yeast).